The sequence spans 353 residues: Phosphoribosylformylglycinamidine cyclo-ligase (353 aa).

The protein belongs to the AIR synthase family.

It localises to the cytoplasm. The catalysed reaction is 2-formamido-N(1)-(5-O-phospho-beta-D-ribosyl)acetamidine + ATP = 5-amino-1-(5-phospho-beta-D-ribosyl)imidazole + ADP + phosphate + H(+). It functions in the pathway purine metabolism; IMP biosynthesis via de novo pathway; 5-amino-1-(5-phospho-D-ribosyl)imidazole from N(2)-formyl-N(1)-(5-phospho-D-ribosyl)glycinamide: step 2/2. This is Phosphoribosylformylglycinamidine cyclo-ligase from Ralstonia nicotianae (strain ATCC BAA-1114 / GMI1000) (Ralstonia solanacearum).